A 464-amino-acid polypeptide reads, in one-letter code: Tryprostatin B synthase (464 aa).

Residues M94 and E102 each coordinate brevianamide F. Residues R113, K201, and Y203 each coordinate dimethylallyl diphosphate. Residue Y205 participates in brevianamide F binding. Positions 294, 296, 380, 382, 446, and 450 each coordinate dimethylallyl diphosphate.

The protein belongs to the tryptophan dimethylallyltransferase family.

It carries out the reaction brevianamide F + dimethylallyl diphosphate = tryprostatin B + diphosphate. The protein operates within mycotoxin biosynthesis. Brevianamide F prenyltransferase; part of the gene cluster that mediates the biosynthesis of fumitremorgins, indole alkaloids that carry not only intriguing chemical structures, but also interesting biological and pharmacological activities. The biosynthesis of fumitremorgin-type alkaloids begins by condensation of the two amino acids L-tryptophan and L-proline to brevianamide F, catalyzed by the non-ribosomal peptide synthetase ftmA. Brevianamide F is then prenylated by the prenyltransferase ftmPT1/ftmB in the presence of dimethylallyl diphosphate, resulting in the formation of tryprostatin B. The three cytochrome P450 monooxygenases, ftmP450-1/ftmC, ftmP450-2/ftmE and ftmP450-3/FtmG, are responsible for the conversion of tryprostatin B to 6-hydroxytryprostatin B, tryprostatin A to fumitremorgin C and fumitremorgin C to 12,13-dihydroxyfumitremorgin C, respectively. The putative methyltransferase ftmMT/ftmD is expected for the conversion of 6-hydroxytryprostatin B to tryprostatin A. FtmPT2/FtmH catalyzes the prenylation of 12,13-dihydroxyfumitre-morgin C in the presence of dimethylallyl diphosphate, resulting in the formation of fumitremorgin B. Fumitremorgin B is further converted to verruculogen by ftmOx1/ftmF via the insertion of an endoperoxide bond between the two prenyl moieties. In some fungal species, verruculogen is further converted to fumitremorgin A, but the enzymes involved in this step have not been identified yet. The protein is Tryprostatin B synthase of Aspergillus fumigatus (Neosartorya fumigata).